We begin with the raw amino-acid sequence, 426 residues long: Vacuole membrane protein hfl11 (426 aa).

Transmembrane regions (helical) follow at residues 39-59, 73-93, 133-153, 172-192, and 223-243; these read SVVRILMMIVIYSSVSFLSVY, IYEAFALYCFFCLLIDYLGGE, GILQYTWLKPFLVIAVLLTKV, IGLVYNISITLSLYSLTTFWV, and VLSITNWLGLLNGTGWIYSLL. The residue at position 364 (Ser364) is a Phosphoserine. The segment at 386 to 409 is ATG8-interacting region; that stretch reads LQFEIDDEMEPLYNQAKQMRYGDY.

It belongs to the TMEM184 family. In terms of assembly, interacts with atg8.

The protein localises to the vacuole membrane. Its function is as follows. Vacuole membrane protein that recruits ATG8 to facilitate the degradation of vacuolar integral membrane proteins during early-stationary vacuole turnover (EVT) when cells enter stationary phase. In Schizosaccharomyces pombe (strain 972 / ATCC 24843) (Fission yeast), this protein is Vacuole membrane protein hfl11.